The following is a 392-amino-acid chain: DNA polymerase IV (392 aa).

Residues 6 to 186 form the UmuC domain; the sequence is IVHLDADAFF…LPIGKLPGVG (181 aa). 2 residues coordinate Mg(2+): aspartate 10 and aspartate 103. Glutamate 104 is a catalytic residue.

This sequence belongs to the DNA polymerase type-Y family. Monomer. Mg(2+) is required as a cofactor.

The protein localises to the cytoplasm. The catalysed reaction is DNA(n) + a 2'-deoxyribonucleoside 5'-triphosphate = DNA(n+1) + diphosphate. Its function is as follows. Poorly processive, error-prone DNA polymerase involved in untargeted mutagenesis. Copies undamaged DNA at stalled replication forks, which arise in vivo from mismatched or misaligned primer ends. These misaligned primers can be extended by PolIV. Exhibits no 3'-5' exonuclease (proofreading) activity. May be involved in translesional synthesis, in conjunction with the beta clamp from PolIII. This chain is DNA polymerase IV, found in Opitutus terrae (strain DSM 11246 / JCM 15787 / PB90-1).